Consider the following 146-residue polypeptide: MRNKVLIVLAVIAGALILKSCGEPYSGAKETVGEFMEEIAEGEGRDAIKYLYPAYRDELAKNFKLPVQFTEMKPSEVLACVLSTMGRNIDEVEIKKAIAVNPNTANVVVKVEDKEGIEKFFSFTVVKEGDKWYIAKIEKYIPQVGR.

This is an uncharacterized protein from Aquifex aeolicus (strain VF5).